The sequence spans 388 residues: Succinate--CoA ligase [ADP-forming] subunit beta (388 aa).

The ATP-grasp domain occupies 9-244 (KKLFAEYGLP…PSQDDPREAH (236 aa)). Residues Lys46, 53 to 55 (GRG), Glu99, Thr102, and Glu107 each bind ATP. Positions 199 and 213 each coordinate Mg(2+). Substrate-binding positions include Asn264 and 321–323 (GIV).

It belongs to the succinate/malate CoA ligase beta subunit family. In terms of assembly, heterotetramer of two alpha and two beta subunits. Requires Mg(2+) as cofactor.

It carries out the reaction succinate + ATP + CoA = succinyl-CoA + ADP + phosphate. The catalysed reaction is GTP + succinate + CoA = succinyl-CoA + GDP + phosphate. The protein operates within carbohydrate metabolism; tricarboxylic acid cycle; succinate from succinyl-CoA (ligase route): step 1/1. Succinyl-CoA synthetase functions in the citric acid cycle (TCA), coupling the hydrolysis of succinyl-CoA to the synthesis of either ATP or GTP and thus represents the only step of substrate-level phosphorylation in the TCA. The beta subunit provides nucleotide specificity of the enzyme and binds the substrate succinate, while the binding sites for coenzyme A and phosphate are found in the alpha subunit. This is Succinate--CoA ligase [ADP-forming] subunit beta from Aeromonas salmonicida (strain A449).